A 392-amino-acid polypeptide reads, in one-letter code: Flavohemoprotein (392 aa).

The region spanning 1 to 139 is the Globin domain; it reads MLNAEQRAII…LADILIGAEE (139 aa). His85 contacts heme b. Catalysis depends on charge relay system residues Tyr95 and Glu138. The interval 150–392 is reductase; the sequence is GGWRGTREFR…EFFGPAAALE (243 aa). The region spanning 153 to 256 is the FAD-binding FR-type domain; the sequence is RGTREFRLVR…FPPAGDFTLA (104 aa). Residues Tyr191 and 205-208 each bind FAD; that span reads RNYS. 268–273 is an NADP(+) binding site; sequence GVGITP. FAD is bound at residue 384-387; the sequence is FFGP.

The protein belongs to the globin family. Two-domain flavohemoproteins subfamily. It in the C-terminal section; belongs to the flavoprotein pyridine nucleotide cytochrome reductase family. Heme b is required as a cofactor. It depends on FAD as a cofactor.

It catalyses the reaction 2 nitric oxide + NADPH + 2 O2 = 2 nitrate + NADP(+) + H(+). The enzyme catalyses 2 nitric oxide + NADH + 2 O2 = 2 nitrate + NAD(+) + H(+). Functionally, is involved in NO detoxification in an aerobic process, termed nitric oxide dioxygenase (NOD) reaction that utilizes O(2) and NAD(P)H to convert NO to nitrate, which protects the bacterium from various noxious nitrogen compounds. Therefore, plays a central role in the inducible response to nitrosative stress. The polypeptide is Flavohemoprotein (Pseudomonas putida (strain ATCC 47054 / DSM 6125 / CFBP 8728 / NCIMB 11950 / KT2440)).